A 790-amino-acid polypeptide reads, in one-letter code: IQ motif and ubiquitin-like domain-containing protein (790 aa).

The span at 1–17 (MSNQPKKYETQNIANST) shows a compositional bias: polar residues. Residues 1–49 (MSNQPKKYETQNIANSTEESDAFDIVTIPVPSEEPQESDQTEEHESGIE) form a disordered region. Residues 130-206 (ATVKVVLIPV…IQVEIFSTNP (77 aa)) form the Ubiquitin-like domain. Positions 337–366 (RLKAVIVIQTYYRQWHAKIFVEDLRRQKSL) constitute an IQ domain.

As to quaternary structure, component of the axonemal radial spoke 1 (RS1) complex, at least composed of spoke head proteins RSPH1, RSPH3, RSPH9 and the cilia-specific component RSPH4A or sperm-specific component RSPH6A, spoke stalk proteins RSPH14, DNAJB13, DYDC1, ROPN1L and NME5, and the anchor protein IQUB. Does not appear to be part of radial spoke complexes 2 or 3 (RS2 or RS3). Interacts with CALM1. Interacts with DNAJB13. Interacts with DYNLL2. Interacts with NME5. Interacts with RSPH3. Interacts with RSPH9. Interacts with ZMYND10. Interacts with calmodulin; the interaction occurs in conditions of low but not high calcium.

It localises to the cytoplasm. The protein localises to the cytoskeleton. It is found in the flagellum axoneme. Its subcellular location is the cell projection. The protein resides in the cilium. Functionally, adapter protein that anchors the radial spoke 1 (RS1) complex to the A microtubule of outer doublet microtubules in axonemes. The triple radial spokes (RS1, RS2 and RS3) are required to modulate beating of the sperm flagellum. May play a role in inhibiting signaling via MAPK1/ERK2 and MAPK3/ERK1. Additionally, may play a role in the functioning of cilia. Not required for the functioning of tracheal or ependymal cilia. The sequence is that of IQ motif and ubiquitin-like domain-containing protein (IQUB) from Macaca fascicularis (Crab-eating macaque).